The sequence spans 161 residues: Cyclic pyranopterin monophosphate synthase (161 aa).

Substrate-binding positions include 75 to 77 (LCH) and 113 to 114 (ME). Asp-128 is a catalytic residue.

This sequence belongs to the MoaC family. As to quaternary structure, homohexamer; trimer of dimers.

It catalyses the reaction (8S)-3',8-cyclo-7,8-dihydroguanosine 5'-triphosphate = cyclic pyranopterin phosphate + diphosphate. The protein operates within cofactor biosynthesis; molybdopterin biosynthesis. In terms of biological role, catalyzes the conversion of (8S)-3',8-cyclo-7,8-dihydroguanosine 5'-triphosphate to cyclic pyranopterin monophosphate (cPMP). The sequence is that of Cyclic pyranopterin monophosphate synthase from Salmonella heidelberg (strain SL476).